Consider the following 496-residue polypeptide: Probable chlorophyll(ide) b reductase NYC1, chloroplastic (496 aa).

A chloroplast-targeting transit peptide spans 1–43; it reads MTTLTKIQVYPQVLEHRLFFRDPIRVGSRLTCRERSNRVYVHR. 2 consecutive transmembrane segments (helical) span residues 105–125 and 132–152; these read YIVT…LSGG and LVWY…ANMV. 166–190 is an NAD(+) binding site; it reads ITGSTRGLGKALAREFLLSGDRVIV. Positions 195 to 224 form a coiled coil; it reads SESVDMTVKELEQNLKEIMSNASESARKKL. The active-site Proton acceptor is the tyrosine 330. A helical transmembrane segment spans residues 470-490; the sequence is WVSVFSLSVVCAFIILQSTTP.

The protein belongs to the short-chain dehydrogenases/reductases (SDR) family. Interacts with NOL to form a complex that acts as a chlorophyll b reductase. Interacts with HCAR, RCCR, SGR1 and the LHCII complex. Part of a SGR1-CCE-LHCII complex, which acts in chlorophyll breakdown.

The protein resides in the plastid. It localises to the chloroplast thylakoid membrane. It catalyses the reaction 7(1)-hydroxychlorophyllide a + NAD(+) = chlorophyllide b + NADH + H(+). The enzyme catalyses 7(1)-hydroxychlorophyllide a + NADP(+) = chlorophyllide b + NADPH + H(+). Its function is as follows. Involved in chlorophyll b degradation. Belongs to the chlorophyll catabolic enzymes (CCEs). The polypeptide is Probable chlorophyll(ide) b reductase NYC1, chloroplastic (NYC1) (Arabidopsis thaliana (Mouse-ear cress)).